The sequence spans 470 residues: MFKVARASQYLAITGAGIEDIKLSKKSWVFPWQSCTVFDVSPVNYTFKVQAMSAEKLPFVLPAVFTIGPRVDDDDALILYARLISPHDKDSNHVHELVEGVIEGETRVLAASMTMEEIFKGTKEFKKEVFDKVQLELNQFGLVIYNANVKQLVDVPGHEYFSYLGQKTQMEAANQARIDVSEAKMKGEIGAKERTGLTLQNAAKIDAESKIISMQRQGEGTKEEIKVRTEVKVFENQKEADVAKANAELAMKKAAWTKDAQVAEVEATKAVALREAELQTQVEKMNALTRTEKLKAEFLSKASVEYETKVQEANWELYNKQKQAEAVLYEKQKQAEAQKAQADAAFYSKQKEAEGLVALASAQGTYLRTLLDAVQNDYSCLRDFLMINNGIYQEIAKTNAMAVRDLQPKISVWNHGGEQGGGSGNAMKDIAGLYKMLPPVLDTVYEQTGMQPPAWIGTLRGAEPKQVTRS.

Cysteine 35 is lipidated: S-palmitoyl cysteine. The stretch at 305–354 forms a coiled coil; sequence EYETKVQEANWELYNKQKQAEAVLYEKQKQAEAQKAQADAAFYSKQKEAE.

The protein belongs to the band 7/mec-2 family. Flotillin subfamily. May be palmitoylated.

It localises to the cell membrane. The protein localises to the membrane. The protein resides in the caveola. In terms of biological role, may act as a scaffolding protein within caveolar membranes, functionally participating in formation of caveolae or caveolae-like vesicles. The sequence is that of Flotillin-like protein 1 (FLOT1) from Arabidopsis thaliana (Mouse-ear cress).